Reading from the N-terminus, the 225-residue chain is Uridine kinase (225 aa).

12–19 (GGTGAGKT) contributes to the ATP binding site.

It belongs to the uridine kinase family.

It is found in the cytoplasm. It carries out the reaction uridine + ATP = UMP + ADP + H(+). The catalysed reaction is cytidine + ATP = CMP + ADP + H(+). Its pathway is pyrimidine metabolism; CTP biosynthesis via salvage pathway; CTP from cytidine: step 1/3. The protein operates within pyrimidine metabolism; UMP biosynthesis via salvage pathway; UMP from uridine: step 1/1. This is Uridine kinase from Halobacterium salinarum (strain ATCC 700922 / JCM 11081 / NRC-1) (Halobacterium halobium).